A 270-amino-acid polypeptide reads, in one-letter code: 4-hydroxy-tetrahydrodipicolinate reductase (270 aa).

NAD(+) contacts are provided by residues 9-14 (GAGGRM) and glutamate 35. NADP(+) is bound at residue arginine 36. Residues 99–101 (GTT) and 123–126 (ASNF) each bind NAD(+). Histidine 156 (proton donor/acceptor) is an active-site residue. Histidine 157 is a binding site for (S)-2,3,4,5-tetrahydrodipicolinate. The Proton donor role is filled by lysine 160. 166-167 (GT) is a (S)-2,3,4,5-tetrahydrodipicolinate binding site.

This sequence belongs to the DapB family.

Its subcellular location is the cytoplasm. The catalysed reaction is (S)-2,3,4,5-tetrahydrodipicolinate + NAD(+) + H2O = (2S,4S)-4-hydroxy-2,3,4,5-tetrahydrodipicolinate + NADH + H(+). It carries out the reaction (S)-2,3,4,5-tetrahydrodipicolinate + NADP(+) + H2O = (2S,4S)-4-hydroxy-2,3,4,5-tetrahydrodipicolinate + NADPH + H(+). It participates in amino-acid biosynthesis; L-lysine biosynthesis via DAP pathway; (S)-tetrahydrodipicolinate from L-aspartate: step 4/4. Functionally, catalyzes the conversion of 4-hydroxy-tetrahydrodipicolinate (HTPA) to tetrahydrodipicolinate. This chain is 4-hydroxy-tetrahydrodipicolinate reductase, found in Pasteurella multocida (strain Pm70).